The following is a 363-amino-acid chain: Fructose-bisphosphate aldolase (363 aa).

2 residues coordinate substrate: arginine 56 and lysine 147. Glutamate 188 functions as the Proton acceptor in the catalytic mechanism. Lysine 230 acts as the Schiff-base intermediate with dihydroxyacetone-P in catalysis.

This sequence belongs to the class I fructose-bisphosphate aldolase family.

It catalyses the reaction beta-D-fructose 1,6-bisphosphate = D-glyceraldehyde 3-phosphate + dihydroxyacetone phosphate. The protein operates within carbohydrate degradation; glycolysis; D-glyceraldehyde 3-phosphate and glycerone phosphate from D-glucose: step 4/4. The polypeptide is Fructose-bisphosphate aldolase (FBPA) (Echinococcus multilocularis (Fox tapeworm)).